A 199-amino-acid polypeptide reads, in one-letter code: Cytosine-containing mismatch-binding protein 1 (199 aa).

Positions 123–197 form a DNA-binding region, HMG box; the sequence is PKKPSSAFIL…QYDKFMKEAG (75 aa).

As to quaternary structure, monomer.

The protein localises to the nucleus. Functionally, binds to cytosines in base mismatches and opposite chemically altered guanines. May be involved in repair of DNA damage. The polypeptide is Cytosine-containing mismatch-binding protein 1 (Schizosaccharomyces pombe (strain 972 / ATCC 24843) (Fission yeast)).